The chain runs to 475 residues: Ribulose bisphosphate carboxylase large chain (475 aa).

The substrate site is built by Asn123 and Thr173. Catalysis depends on Lys175, which acts as the Proton acceptor. A substrate-binding site is contributed by Lys177. The Mg(2+) site is built by Lys201, Asp203, and Glu204. N6-carboxylysine is present on Lys201. His294 serves as the catalytic Proton acceptor. Arg295, His327, and Ser379 together coordinate substrate.

The protein belongs to the RuBisCO large chain family. Type I subfamily. As to quaternary structure, heterohexadecamer of 8 large chains and 8 small chains. Mg(2+) is required as a cofactor.

It localises to the plastid. Its subcellular location is the cyanelle. The catalysed reaction is 2 (2R)-3-phosphoglycerate + 2 H(+) = D-ribulose 1,5-bisphosphate + CO2 + H2O. It catalyses the reaction D-ribulose 1,5-bisphosphate + O2 = 2-phosphoglycolate + (2R)-3-phosphoglycerate + 2 H(+). RuBisCO catalyzes two reactions: the carboxylation of D-ribulose 1,5-bisphosphate, the primary event in carbon dioxide fixation, as well as the oxidative fragmentation of the pentose substrate in the photorespiration process. Both reactions occur simultaneously and in competition at the same active site. This is Ribulose bisphosphate carboxylase large chain from Cyanophora paradoxa.